The sequence spans 203 residues: E3 ubiquitin-protein ligase RNF152 (203 aa).

An RING-type zinc finger spans residues 12–55; that stretch reads CQICFNYYSPRRRPKLLDCKHTCCSVCLQQMRTSQKDLRCPWCR. The chain crosses the membrane as a helical span at residues 167 to 187; sequence SGVCTVILVACVLVFLLGIVL.

It belongs to the RNF152 family.

The protein resides in the lysosome membrane. The catalysed reaction is S-ubiquitinyl-[E2 ubiquitin-conjugating enzyme]-L-cysteine + [acceptor protein]-L-lysine = [E2 ubiquitin-conjugating enzyme]-L-cysteine + N(6)-ubiquitinyl-[acceptor protein]-L-lysine.. It participates in protein modification; protein ubiquitination. Functionally, E3 ubiquitin-protein ligase that acts as a negative regulator of mTORC1 signaling by mediating ubiquitination of RagA/RRAGA and RHEB. Catalyzes 'Lys-63'-linked polyubiquitination of RagA/RRAGA in response to amino acid starvation, thereby regulating mTORC1 signaling. Also mediates monoubiquitination of RHEB, promoting its association with the TSC-TBC complex and subsequent inhibition. Also mediates 'Lys-48'-linked polyubiquitination of target proteins and their subsequent targeting to the proteasome for degradation. This is E3 ubiquitin-protein ligase RNF152 from Gallus gallus (Chicken).